Here is a 578-residue protein sequence, read N- to C-terminus: Membrane protein insertase YidC (578 aa).

The helical transmembrane segment at 3-23 (IQRSILIVALAVVSYLLVLQW) threads the bilayer. The tract at residues 34 to 72 (AASASMNTTQGLPDTPSASGTSSDVPTAQSSAAGSEAAD) is disordered. A compositionally biased stretch (polar residues) spans 37–66 (ASMNTTQGLPDTPSASGTSSDVPTAQSSAA). Helical transmembrane passes span 361–381 (LELT…FWLL), 387–407 (LIGN…LAFF), 457–477 (LGGC…YWVL), 500–520 (PFFI…MLNP), and 535–555 (PIIF…YWVV).

It belongs to the OXA1/ALB3/YidC family. Type 1 subfamily. Interacts with the Sec translocase complex via SecD. Specifically interacts with transmembrane segments of nascent integral membrane proteins during membrane integration.

Its subcellular location is the cell inner membrane. In terms of biological role, required for the insertion and/or proper folding and/or complex formation of integral membrane proteins into the membrane. Involved in integration of membrane proteins that insert both dependently and independently of the Sec translocase complex, as well as at least some lipoproteins. Aids folding of multispanning membrane proteins. In Pseudomonas aeruginosa (strain LESB58), this protein is Membrane protein insertase YidC.